The chain runs to 160 residues: Ribosomal RNA large subunit methyltransferase H (160 aa).

S-adenosyl-L-methionine contacts are provided by Leu76 and Gly108.

This sequence belongs to the RNA methyltransferase RlmH family. In terms of assembly, homodimer.

The protein resides in the cytoplasm. The catalysed reaction is pseudouridine(1915) in 23S rRNA + S-adenosyl-L-methionine = N(3)-methylpseudouridine(1915) in 23S rRNA + S-adenosyl-L-homocysteine + H(+). Its function is as follows. Specifically methylates the pseudouridine at position 1915 (m3Psi1915) in 23S rRNA. The chain is Ribosomal RNA large subunit methyltransferase H from Xanthobacter autotrophicus (strain ATCC BAA-1158 / Py2).